Consider the following 368-residue polypeptide: sn-1 linoleoyl-lipid 6-desaturase (368 aa).

A run of 2 helical transmembrane segments spans residues 47-67 (IILA…DVLW) and 68-88 (MKLL…FNIS). The short motif at 89-93 (HDGNH) is the Histidine box-1 element. The Histidine box-2 motif lies at 124–129 (HNVLHH). 3 consecutive transmembrane segments (helical) span residues 164–184 (WFIW…DVQT), 204–224 (IATL…IPIA), and 233–253 (VIGA…VFML). The short motif at 305-309 (HHLFP) is the Histidine box-3 element.

Belongs to the fatty acid desaturase type 2 family. It depends on Fe(2+) as a cofactor.

Its subcellular location is the cell inner membrane. It localises to the cellular thylakoid membrane. It catalyses the reaction a 1-[(9Z,12Z)-octadecdienoyl]-2-acyl-glycerolipid + 2 reduced [2Fe-2S]-[ferredoxin] + O2 + 2 H(+) = a 1-[(6Z,9Z,12Z)-octadectrienoyl]-2-acyl-glycerolipid + 2 oxidized [2Fe-2S]-[ferredoxin] + 2 H2O. The protein operates within lipid metabolism; polyunsaturated fatty acid biosynthesis. Activity requires ferredoxin, which is the natural electron donor, or cytochrome b5. In addition, activity is increased in the presence of the intermediate electron donors, NADPH and FADH(2). Desaturase involved in fatty acid biosynthesis. Introduces a double bond at carbon 6 of linoleoyl group (18:2) attached to the sn-1 position of the glycerol moiety of membrane glycerolipids, leading to the formation of gamma-linolenic acid (GLA). The chain is sn-1 linoleoyl-lipid 6-desaturase from Arthrospira platensis (Spirulina platensis).